The following is a 175-amino-acid chain: Ribosome maturation factor RimM (175 aa).

The region spanning 103-175 is the PRC barrel domain; the sequence is EGEYYWSDLI…LLTVDWDPDF (73 aa).

This sequence belongs to the RimM family. Binds ribosomal protein uS19.

It is found in the cytoplasm. In terms of biological role, an accessory protein needed during the final step in the assembly of 30S ribosomal subunit, possibly for assembly of the head region. Essential for efficient processing of 16S rRNA. May be needed both before and after RbfA during the maturation of 16S rRNA. It has affinity for free ribosomal 30S subunits but not for 70S ribosomes. This is Ribosome maturation factor RimM from Nitrosococcus oceani (strain ATCC 19707 / BCRC 17464 / JCM 30415 / NCIMB 11848 / C-107).